Here is a 970-residue protein sequence, read N- to C-terminus: Unconventional myosin-XIX (970 aa).

The Myosin motor domain maps to 35–758 (YKLDDLTRVN…MLELLECGRA (724 aa)). 132–139 (GESGAGKT) is a binding site for ATP. The actin-binding stretch occupies residues 602–624 (LEQLLQVLHSTTPHYIRCIKPNS). Residue serine 685 is modified to Phosphoserine. IQ domains lie at 759-779 (RVLE…RHRE) and 783-812 (QWRA…AATV). Residues 824-970 (MACLAAKELD…VTSSAFTGLG (147 aa)) form a myMOMA region region.

This sequence belongs to the TRAFAC class myosin-kinesin ATPase superfamily. Myosin family. As to quaternary structure, myosin is a hexamer of 2 heavy chains and 4 light chains: interacts with myosin light chains MYL9 and MYL12B. Widely expressed in multiple tissues and cell lines.

The protein localises to the mitochondrion outer membrane. The protein resides in the cytoplasm. It localises to the cytoskeleton. Its function is as follows. Actin-based motor molecule with ATPase activity that localizes to the mitochondrion outer membrane. Motor protein that moves towards the plus-end of actin filaments. Required for mitochondrial inheritance during mitosis. May be involved in mitochondrial transport or positioning. The polypeptide is Unconventional myosin-XIX (Homo sapiens (Human)).